The primary structure comprises 388 residues: Trichodiene synthase (388 aa).

Residues Asp-109, Glu-173, Asn-234, Ser-238, Glu-242, and Asp-248 each contribute to the Mg(2+) site. Positions 109–113 (DDSRE) are aspartate-rich domain.

The protein belongs to the trichodiene synthase family. Requires Mg(2+) as cofactor. It depends on Mn(2+) as a cofactor.

It catalyses the reaction (2E,6E)-farnesyl diphosphate = trichodiene + diphosphate. The protein operates within sesquiterpene biosynthesis; trichothecene biosynthesis. Functionally, trichodiene synthase; part of the gene cluster that mediates the production of the antimicrobial trichothecene harzianum A (HA) that plays a role in Botrytis cinerea antagonistic activity and plant defense priming. The biosynthesis of harzianum A begins with the cyclization of farnesyl diphosphate to trichodiene and is catalyzed by the trichodiene synthase TRI5. Trichodiene undergoes a series of oxygenations catalyzed by the cytochrome P450 monooxygenase TRI4. TRI4 controls the addition of 3 oxygens at C-2, C-11, and the C-12, C-13-epoxide to form the intermediate isotrichodiol. Isotrichodiol then undergoes a non-enzymatic isomerization and cyclization to form 12,13-epoxytrichothec-9-ene (EPT) which is further converted to trichodermol by the cytochrome P450 monooxygenase TRI11 via C-4 hydroxylation. The last step of HA synthesis is esterification of an octatriendioyl moiety to the C-4 oxygen of trichodermol. The octatriendioyl moiety is probably produced by the polyketide synthase TRI17 and the esterification performed by the trichothecene O-acetyltransferase TRI3. The sequence is that of Trichodiene synthase from Trichoderma arundinaceum.